The primary structure comprises 124 residues: uncharacterized protein (124 aa).

The protein resides in the cytoplasm. The protein localises to the nucleus. This is an uncharacterized protein from Schizosaccharomyces pombe (strain 972 / ATCC 24843) (Fission yeast).